The chain runs to 281 residues: Diaminopimelate epimerase (281 aa).

The substrate site is built by asparagine 13, glutamine 51, and asparagine 70. Cysteine 79 acts as the Proton donor in catalysis. Substrate is bound by residues 80 to 81, asparagine 163, asparagine 196, and 214 to 215; these read GN and ER. The Proton acceptor role is filled by cysteine 223. Residue 224 to 225 coordinates substrate; sequence GS.

Belongs to the diaminopimelate epimerase family. In terms of assembly, homodimer.

It localises to the cytoplasm. It carries out the reaction (2S,6S)-2,6-diaminopimelate = meso-2,6-diaminopimelate. The protein operates within amino-acid biosynthesis; L-lysine biosynthesis via DAP pathway; DL-2,6-diaminopimelate from LL-2,6-diaminopimelate: step 1/1. Its function is as follows. Catalyzes the stereoinversion of LL-2,6-diaminopimelate (L,L-DAP) to meso-diaminopimelate (meso-DAP), a precursor of L-lysine and an essential component of the bacterial peptidoglycan. This is Diaminopimelate epimerase from Alcanivorax borkumensis (strain ATCC 700651 / DSM 11573 / NCIMB 13689 / SK2).